Consider the following 855-residue polypeptide: DNA polymerase (855 aa).

Positions 107–332 (KPEMKPVFDA…LHNFFLPKIE (226 aa)) constitute a 3'-5' exonuclease domain. Positions 333–833 (KNEKLCSLYY…MDKEHPDHSK (501 aa)) are polymerase.

Belongs to the DNA polymerase type-A family. Single-chain monomer with multiple functions.

The enzyme catalyses DNA(n) + a 2'-deoxyribonucleoside 5'-triphosphate = DNA(n+1) + diphosphate. In terms of biological role, replicates the viral genomic DNA. This polymerase possesses two enzymatic activities: DNA synthesis (polymerase) and an exonucleolytic activity that degrades single-stranded DNA in the 3'-5' direction for proofreading purpose. The DNA synthesis very likely occurs by strand displacement. The chain is DNA polymerase from Escherichia phage T5 (Enterobacteria phage T5).